Consider the following 170-residue polypeptide: Small ribosomal subunit protein uS9 (170 aa).

Residues 1 to 47 are disordered; the sequence is MAETTPEQPLEEIDIDSYTTESEVPVEGEYTSESMASAFGEPQPAAG.

This sequence belongs to the universal ribosomal protein uS9 family.

This chain is Small ribosomal subunit protein uS9 (rpsI), found in Streptomyces coelicolor (strain ATCC BAA-471 / A3(2) / M145).